A 153-amino-acid chain; its full sequence is Large ribosomal subunit protein uL13 (153 aa).

The protein belongs to the universal ribosomal protein uL13 family. In terms of assembly, part of the 50S ribosomal subunit.

Functionally, this protein is one of the early assembly proteins of the 50S ribosomal subunit, although it is not seen to bind rRNA by itself. It is important during the early stages of 50S assembly. The protein is Large ribosomal subunit protein uL13 of Chelativorans sp. (strain BNC1).